A 359-amino-acid chain; its full sequence is Protein mab-21-like 2-B (359 aa).

This sequence belongs to the mab-21 family.

Its subcellular location is the nucleus. It localises to the cytoplasm. Required for several aspects of embryonic development including normal development of the eye. This is Protein mab-21-like 2-B (mab21l2-b) from Xenopus laevis (African clawed frog).